The sequence spans 204 residues: ATP-dependent Clp protease proteolytic subunit (204 aa).

The active-site Nucleophile is the S102. Residue H127 is part of the active site.

Belongs to the peptidase S14 family. Fourteen ClpP subunits assemble into 2 heptameric rings which stack back to back to give a disk-like structure with a central cavity, resembling the structure of eukaryotic proteasomes.

Its subcellular location is the cytoplasm. It catalyses the reaction Hydrolysis of proteins to small peptides in the presence of ATP and magnesium. alpha-casein is the usual test substrate. In the absence of ATP, only oligopeptides shorter than five residues are hydrolyzed (such as succinyl-Leu-Tyr-|-NHMec, and Leu-Tyr-Leu-|-Tyr-Trp, in which cleavage of the -Tyr-|-Leu- and -Tyr-|-Trp bonds also occurs).. In terms of biological role, cleaves peptides in various proteins in a process that requires ATP hydrolysis. Has a chymotrypsin-like activity. Plays a major role in the degradation of misfolded proteins. This chain is ATP-dependent Clp protease proteolytic subunit, found in Neisseria meningitidis serogroup A / serotype 4A (strain DSM 15465 / Z2491).